A 368-amino-acid polypeptide reads, in one-letter code: Quinolinate synthase (368 aa).

Positions 46 and 63 each coordinate iminosuccinate. Residue cysteine 110 coordinates [4Fe-4S] cluster. Residues 141–143 (YVN) and serine 162 contribute to the iminosuccinate site. Cysteine 230 provides a ligand contact to [4Fe-4S] cluster. Residues 256–258 (HPE) and threonine 273 contribute to the iminosuccinate site. [4Fe-4S] cluster is bound at residue cysteine 320.

This sequence belongs to the quinolinate synthase family. Type 3 subfamily. The cofactor is [4Fe-4S] cluster.

The protein localises to the cytoplasm. It catalyses the reaction iminosuccinate + dihydroxyacetone phosphate = quinolinate + phosphate + 2 H2O + H(+). The protein operates within cofactor biosynthesis; NAD(+) biosynthesis; quinolinate from iminoaspartate: step 1/1. Its function is as follows. Catalyzes the condensation of iminoaspartate with dihydroxyacetone phosphate to form quinolinate. This chain is Quinolinate synthase, found in Bacillus cereus (strain ATCC 14579 / DSM 31 / CCUG 7414 / JCM 2152 / NBRC 15305 / NCIMB 9373 / NCTC 2599 / NRRL B-3711).